We begin with the raw amino-acid sequence, 337 residues long: Quercetin 2,3-dioxygenase (337 aa).

Cupin type-2 domains lie at 55 to 110 (KGDA…MQSH) and 226 to 281 (PKGD…RLDS). Residues H62, H64, E69, H103, H234, H236, E241, and H275 each contribute to the Fe cation site.

Homodimer. It depends on Fe(2+) as a cofactor.

The catalysed reaction is quercetin + O2 = 2-(3,4-dihydroxybenzoyloxy)-4,6-dihydroxybenzoate + CO. It participates in flavonoid metabolism; quercetin degradation. Performs the first step in the degradation of the flavonoid quercetin by a dioxygenase reaction. The enzyme catalyzes the cleavage of the O-heteroaromatic ring of the flavonol quercetin yielding the depside 2-protocatechuoyl-phloroglucinol carboxylic acid and carbon monoxide. This involves the remarkable dioxygenolytic cleavage of two carbon-carbon bonds. This chain is Quercetin 2,3-dioxygenase (qdoI), found in Bacillus subtilis (strain 168).